A 65-amino-acid chain; its full sequence is Large ribosomal subunit protein uL30 (65 aa).

This sequence belongs to the universal ribosomal protein uL30 family. In terms of assembly, part of the 50S ribosomal subunit.

This Mesorhizobium japonicum (strain LMG 29417 / CECT 9101 / MAFF 303099) (Mesorhizobium loti (strain MAFF 303099)) protein is Large ribosomal subunit protein uL30.